The following is a 287-amino-acid chain: MGTRSYRPYTPSTRQVTVSDFAEITKTEPEKSLTTSKHRAKGRNNTGRITSRRRGGGHKQLYRIIDFKRDKHNIPAKVAAIEYDPNRNARIALLYYQDGEKRYILHPNGLKVGTIIISGPESPFEDGNALPLSRIPLGTSVHNVEMTPGKGGQIVRAAGASAQVVAKEGDYVTLKLPSGEVRLIRRDCYATIGQVGNTDARNLSAGKAGRNRWKGRRPKVRGSVMNPVDHPHGGGEGRAPIGRSGPVTPWGKPTLGAKTRNRKKLSSKFIVRRRRKSSKRGRGGRES.

Disordered stretches follow at residues 25–57 and 203–287; these read TKTE…RGGG and LSAG…GRES. Basic residues-rich tracts occupy residues 209–220 and 259–287; these read GRNRWKGRRPKV and TRNR…GRES.

Belongs to the universal ribosomal protein uL2 family. In terms of assembly, part of the 50S ribosomal subunit. Forms a bridge to the 30S subunit in the 70S ribosome.

Functionally, one of the primary rRNA binding proteins. Required for association of the 30S and 50S subunits to form the 70S ribosome, for tRNA binding and peptide bond formation. It has been suggested to have peptidyltransferase activity; this is somewhat controversial. Makes several contacts with the 16S rRNA in the 70S ribosome. This is Large ribosomal subunit protein uL2 from Nostoc punctiforme (strain ATCC 29133 / PCC 73102).